The chain runs to 131 residues: MKKSGILNSEVASVVAGMGHMDWLSIGDAGMPVPMGTKKIDLCVDKELPTFMQILENVLKEMKIQKIYLADEIKDQNPEQLENIKQALPDVEIEFMPHTDLKKNLAKTHAFIRTGEMTPYSNIILESGVTF.

His20 functions as the Proton donor in the catalytic mechanism. Residues Asp28, His98, and 120–122 (YSN) contribute to the substrate site.

Belongs to the RbsD / FucU family. RbsD subfamily. Homodecamer.

It is found in the cytoplasm. The catalysed reaction is beta-D-ribopyranose = beta-D-ribofuranose. It functions in the pathway carbohydrate metabolism; D-ribose degradation; D-ribose 5-phosphate from beta-D-ribopyranose: step 1/2. In terms of biological role, catalyzes the interconversion of beta-pyran and beta-furan forms of D-ribose. This chain is D-ribose pyranase, found in Limosilactobacillus fermentum (strain NBRC 3956 / LMG 18251) (Lactobacillus fermentum).